The chain runs to 131 residues: MRHRMKRHKLGRYGSHRRSLLRNLSREIVEHGSIVTTTAKAKALKTFMDKLVSKAIEAATTEDRARSVHLRRQINAVLGDRRLTNKLVDEIAKNYVGRRGGYVRVLRIGFRRGDAAEMSLVQLVEASSQEG.

It belongs to the bacterial ribosomal protein bL17 family. As to quaternary structure, part of the 50S ribosomal subunit. Contacts protein L32.

The chain is Large ribosomal subunit protein bL17 from Thermotoga neapolitana (strain ATCC 49049 / DSM 4359 / NBRC 107923 / NS-E).